The primary structure comprises 340 residues: Uroporphyrinogen decarboxylase (340 aa).

Substrate is bound by residues 21 to 25, Asp71, Tyr148, Ser203, and His316; that span reads RQAGR.

This sequence belongs to the uroporphyrinogen decarboxylase family. Homodimer.

It is found in the cytoplasm. The catalysed reaction is uroporphyrinogen III + 4 H(+) = coproporphyrinogen III + 4 CO2. Its pathway is porphyrin-containing compound metabolism; protoporphyrin-IX biosynthesis; coproporphyrinogen-III from 5-aminolevulinate: step 4/4. In terms of biological role, catalyzes the decarboxylation of four acetate groups of uroporphyrinogen-III to yield coproporphyrinogen-III. This chain is Uroporphyrinogen decarboxylase, found in Campylobacter concisus (strain 13826).